Consider the following 286-residue polypeptide: Glycine--tRNA ligase alpha subunit (286 aa).

This sequence belongs to the class-II aminoacyl-tRNA synthetase family. In terms of assembly, tetramer of two alpha and two beta subunits.

It is found in the cytoplasm. The catalysed reaction is tRNA(Gly) + glycine + ATP = glycyl-tRNA(Gly) + AMP + diphosphate. This Thermotoga sp. (strain RQ2) protein is Glycine--tRNA ligase alpha subunit.